Consider the following 535-residue polypeptide: Palmdelphin (535 aa).

The stretch at 1–105 (MEEAELLKER…KEELQVSTKE (105 aa)) forms a coiled coil. The segment at 423–450 (VVIDDDDDDDDDEEADKKGEENTKESVS) is disordered. Acidic residues predominate over residues 424–436 (VIDDDDDDDDDEE). Residues 437-446 (ADKKGEENTK) show a composition bias toward basic and acidic residues.

This sequence belongs to the paralemmin family.

It localises to the cytoplasm. It is found in the cell projection. The protein localises to the dendrite. Its subcellular location is the dendritic spine. The polypeptide is Palmdelphin (palmd) (Xenopus laevis (African clawed frog)).